The sequence spans 55 residues: Bowman-Birk type proteinase inhibitor B1 (55 aa).

Disulfide bonds link C6–C53, C12–C17, C26–C33, and C30–C45.

It belongs to the Bowman-Birk serine protease inhibitor family. As to expression, expressed in bulb (at protein level).

Its function is as follows. Serine protease inhibitor. Weakly inhibits trypsin (Ki = 167 nM). Does not inhibit bacterial subtilisin or mamallian chymotrypsin. The protein is Bowman-Birk type proteinase inhibitor B1 of Hyacinthus orientalis (Common hyacinth).